A 119-amino-acid chain; its full sequence is Protein ELF4-LIKE 2 (119 aa).

The disordered stretch occupies residues 91–119 (SVDASSEGESTGTLKSDGKANNQKRFRSG). Residues 93-111 (DASSEGESTGTLKSDGKAN) show a composition bias toward polar residues.

The protein belongs to the EARLY FLOWERING 4 family. As to quaternary structure, homodimer.

It is found in the nucleus. Its function is as follows. Component of the central CCA1/LHY-TOC1 feedback loop in the circadian clock that promotes clock accuracy and is required for sustained rhythms in the absence of daily light/dark cycles. The polypeptide is Protein ELF4-LIKE 2 (EFL2) (Arabidopsis thaliana (Mouse-ear cress)).